A 590-amino-acid chain; its full sequence is Aspartate--tRNA(Asp/Asn) ligase (590 aa).

E169 lines the L-aspartate pocket. Residues 193-196 (QLFK) form an aspartate region. Residue R215 coordinates L-aspartate. Residues 215 to 217 (RDE) and Q224 contribute to the ATP site. H447 contacts L-aspartate. E479 contacts ATP. R486 provides a ligand contact to L-aspartate. 531-534 (GWDR) is an ATP binding site. A disordered region spans residues 556–590 (GGFDPLTAAPAPITPEQRKEAGVDARPQQDLPPQS).

Belongs to the class-II aminoacyl-tRNA synthetase family. Type 1 subfamily. As to quaternary structure, homodimer.

Its subcellular location is the cytoplasm. It catalyses the reaction tRNA(Asx) + L-aspartate + ATP = L-aspartyl-tRNA(Asx) + AMP + diphosphate. Its function is as follows. Aspartyl-tRNA synthetase with relaxed tRNA specificity since it is able to aspartylate not only its cognate tRNA(Asp) but also tRNA(Asn). Reaction proceeds in two steps: L-aspartate is first activated by ATP to form Asp-AMP and then transferred to the acceptor end of tRNA(Asp/Asn). The sequence is that of Aspartate--tRNA(Asp/Asn) ligase from Nocardioides sp. (strain ATCC BAA-499 / JS614).